Here is a 657-residue protein sequence, read N- to C-terminus: MAPNLQPQPQSQLQRPRLKDHRPWSGLSNISKRSFRSCATSAFEADDERSSSDGDMSPRNSEADLRRPVVPRHFGHDARPTSRRELLGWYAYAFAAETYVICGIASFIPILLETLARENGVLVSDRKTPCGSSDSKNDGDGQCIVWVFGMEINTASFAMYTFSVSVLVQALLVVSISCAADHGNYRKKLLLTFAWIGSFAVMSYIFITKDNYILGALLTVISNTSFGASFVLLNSFLPLLVRYHPDVIEANVATTPDLGSSEFESRPLDQSVGQLESSPVTATSPLLHPEDGGRLKPTASHAEITSKELELSTRISAIGIGTGYIAALFLQCICIGVLISLHNTTWGQRVVLFMVGVWWTVFTIPAAMWLRPRPGPPLADNGRKGIMAGLAYILYAWKSLFKTIQQARRLLDIVLFLAGWFLLSDAIATTSSTAILFAKTQLHMKPWALGMINVISTTAGVFGAFGWSWVSRLFNLKAHQTILVCIALFELIPLYGLLGYLPFVKNWGVFGLQQPWEMYPLAAVYGVVLGGLSGYCRSLYGELIPPGSEAAFYALYAITDKGSSVFGPTIVGAIIDRTGTIRPAFWFLAVLVGFPAPLIWFIDVERGRREGAKLAKSITDSIVQEEDESDDGAERRGMLSDYEREHGQSIDDERAGR.

Low complexity predominate over residues 1-15 (MAPNLQPQPQSQLQR). A disordered region spans residues 1–78 (MAPNLQPQPQ…VVPRHFGHDA (78 aa)). The Cytoplasmic segment spans residues 1–91 (MAPNLQPQPQ…SRRELLGWYA (91 aa)). A compositionally biased stretch (polar residues) spans 26 to 40 (GLSNISKRSFRSCAT). Residues 92 to 112 (YAFAAETYVICGIASFIPILL) traverse the membrane as a helical segment. At 113–155 (ETLARENGVLVSDRKTPCGSSDSKNDGDGQCIVWVFGMEINTA) the chain is on the vacuolar side. The chain crosses the membrane as a helical span at residues 156 to 176 (SFAMYTFSVSVLVQALLVVSI). Residues 177–187 (SCAADHGNYRK) are Cytoplasmic-facing. A helical transmembrane segment spans residues 188-208 (KLLLTFAWIGSFAVMSYIFIT). Over 209–212 (KDNY) the chain is Vacuolar. A helical transmembrane segment spans residues 213–233 (ILGALLTVISNTSFGASFVLL). The Cytoplasmic segment spans residues 234-317 (NSFLPLLVRY…ELELSTRISA (84 aa)). A helical transmembrane segment spans residues 318-338 (IGIGTGYIAALFLQCICIGVL). Topologically, residues 339 to 349 (ISLHNTTWGQR) are vacuolar. N-linked (GlcNAc...) asparagine glycosylation occurs at N343. Residues 350 to 370 (VVLFMVGVWWTVFTIPAAMWL) traverse the membrane as a helical segment. At 371 to 384 (RPRPGPPLADNGRK) the chain is on the cytoplasmic side. Residues 385-405 (GIMAGLAYILYAWKSLFKTIQ) traverse the membrane as a helical segment. The Vacuolar segment spans residues 406 to 409 (QARR). Residues 410–430 (LLDIVLFLAGWFLLSDAIATT) form a helical membrane-spanning segment. Residues 431–446 (SSTAILFAKTQLHMKP) lie on the Cytoplasmic side of the membrane. Residues 447-467 (WALGMINVISTTAGVFGAFGW) traverse the membrane as a helical segment. Topologically, residues 468 to 481 (SWVSRLFNLKAHQT) are vacuolar. The helical transmembrane segment at 482 to 502 (ILVCIALFELIPLYGLLGYLP) threads the bilayer. The Cytoplasmic portion of the chain corresponds to 503 to 515 (FVKNWGVFGLQQP). A helical transmembrane segment spans residues 516–536 (WEMYPLAAVYGVVLGGLSGYC). Over 537–554 (RSLYGELIPPGSEAAFYA) the chain is Vacuolar. A helical membrane pass occupies residues 555–575 (LYAITDKGSSVFGPTIVGAII). The Cytoplasmic segment spans residues 576–583 (DRTGTIRP). A helical membrane pass occupies residues 584–604 (AFWFLAVLVGFPAPLIWFIDV). Residues 605–657 (ERGRREGAKLAKSITDSIVQEEDESDDGAERRGMLSDYEREHGQSIDDERAGR) are Vacuolar-facing. The interval 615-657 (AKSITDSIVQEEDESDDGAERRGMLSDYEREHGQSIDDERAGR) is disordered. Residues 632–657 (GAERRGMLSDYEREHGQSIDDERAGR) show a composition bias toward basic and acidic residues.

Belongs to the ATG22 family.

Its subcellular location is the vacuole membrane. Its function is as follows. Vacuolar effluxer which mediate the efflux of leucine and other amino acids resulting from autophagic degradation. The release of autophagic amino acids allows the maintenance of protein synthesis and viability during nitrogen starvation. Autophagy is required for proper vegetative growth, asexual/sexual reproduction, and full virulence. Autophagy is particularly involved in the biosynthesis of deoxynivalenol (DON), an important virulence determinant. This is Autophagy-related protein 22 from Gibberella zeae (strain ATCC MYA-4620 / CBS 123657 / FGSC 9075 / NRRL 31084 / PH-1) (Wheat head blight fungus).